Consider the following 232-residue polypeptide: MSRFTFKQFHINQNSCAMKVGTDGILLGAWADVKHCKNILDMGCGTGLLALMLAQRTEENCQIQAVELDPIAAKQAQENINNSVWKNRIQLTQVDIQHFLQTTEQTFDLIVANPPYFEQGIACKNEERELARYTKQSHLNWLEWAATRLSENGRISFVLPYEAGKTLTKSTALFCIKQTNVITKIGKTPQRMLLTFAKQPEVLMQDQLVIYDADNQYTEAFIELTKDFYLKF.

This sequence belongs to the methyltransferase superfamily. tRNA (adenine-N(6)-)-methyltransferase family.

It is found in the cytoplasm. It catalyses the reaction adenosine(37) in tRNA1(Val) + S-adenosyl-L-methionine = N(6)-methyladenosine(37) in tRNA1(Val) + S-adenosyl-L-homocysteine + H(+). Functionally, specifically methylates the adenine in position 37 of tRNA(1)(Val) (anticodon cmo5UAC). This is tRNA1(Val) (adenine(37)-N6)-methyltransferase from Haemophilus influenzae (strain ATCC 51907 / DSM 11121 / KW20 / Rd).